Here is a 210-residue protein sequence, read N- to C-terminus: Imidazoleglycerol-phosphate dehydratase (210 aa).

The segment at 1-23 (MNDSLLSNGHAPPLRQATVDRQT) is disordered.

This sequence belongs to the imidazoleglycerol-phosphate dehydratase family.

It is found in the cytoplasm. It catalyses the reaction D-erythro-1-(imidazol-4-yl)glycerol 3-phosphate = 3-(imidazol-4-yl)-2-oxopropyl phosphate + H2O. The protein operates within amino-acid biosynthesis; L-histidine biosynthesis; L-histidine from 5-phospho-alpha-D-ribose 1-diphosphate: step 6/9. The sequence is that of Imidazoleglycerol-phosphate dehydratase from Thermosynechococcus vestitus (strain NIES-2133 / IAM M-273 / BP-1).